Reading from the N-terminus, the 128-residue chain is Pi-hexatoxin-Hi1c (128 aa).

The N-terminal stretch at 1 to 19 (MKLRITLALTSVLAFCVFG) is a signal peptide. A propeptide spanning residues 20-47 (DKENENLMENLLEDDLLDIFTDAIHMER) is cleaved from the precursor. 6 disulfide bridges follow: cysteine 54-cysteine 69, cysteine 61-cysteine 74, cysteine 68-cysteine 84, cysteine 93-cysteine 108, cysteine 100-cysteine 113, and cysteine 107-cysteine 124. Domain repeat units lie at residues 54–84 (CIAK…HEVC) and 93–124 (CLEK…HPVC). Residues 54 to 124 (CIAKWKSCAG…ERRGNKHPVC (71 aa)) form a 2 X approximate repeats with cysteine pattern C-C-CC-C-C region.

The protein belongs to the psalmotoxin-1 family. Double-knot toxin subfamily. In terms of tissue distribution, expressed by the venom gland.

It is found in the secreted. This toxin potently and selectively inhibits ASIC1a, an isoform of the gene ASIC1. It incompletely inhibits ASIC1a activation in a pH-independent and slowly reversible manner. This toxin acts by binding to and stabilizing the closed state of the channel, thereby impeding the transition into a conducting state. This toxin may bind to the acidic pocket of ASIC1a, since mutation of a key residue of this pocket (Arg-350) abolishes the ability of the toxin to inhibit ASIC1a. In vivo, this toxin protects the brain from neuronal injury when administered up to 8 hours after stroke onset. This Hadronyche infensa (Fraser island funnel-web spider) protein is Pi-hexatoxin-Hi1c.